Consider the following 623-residue polypeptide: V-type proton ATPase catalytic subunit A (623 aa).

252–259 (GAFGCGKT) contacts ATP.

Belongs to the ATPase alpha/beta chains family. V-ATPase is a heteromultimeric enzyme composed of a peripheral catalytic V1 complex (components A to H) attached to an integral membrane V0 proton pore complex (components: a, c, c'', d and e). Binds to the deubiquitinating enzyme AMSH3.

It localises to the vacuole membrane. It carries out the reaction ATP + H2O + 4 H(+)(in) = ADP + phosphate + 5 H(+)(out). Functionally, catalytic subunit of the peripheral V1 complex of vacuolar ATPase. V-ATPase vacuolar ATPase is responsible for acidifying a variety of intracellular compartments in eukaryotic cells. This chain is V-type proton ATPase catalytic subunit A (VHA-A), found in Arabidopsis thaliana (Mouse-ear cress).